The following is a 288-amino-acid chain: MSRTFLKMNGLGNDFVVIQTLTEAFDPTPEQIRAIAKRPGVDGKGGIGCDQVIAIDPPRAEGASAYVRFWNSDGEVAGACGNGTRCVAWLLMQSAGKDAVAFDTVAGRLSGVAAGDKLVTVDMGPPGLDWTQIPLAEEMNTERVELQVGPIDAPLVHTPVCVSMGNPHVVFFVDAPVTDDFARGTGSLVEHHPLFPEGVNVGFAHIASRDHIRLKVWERGAGLTQACGTGACAAQVAAVRRGLTDRKARVEFDTGSLTIEWRESDGHVIMTGPITMEYAGKLPELVAA.

Substrate contacts are provided by Asn13, Gln51, and Asn71. Catalysis depends on Cys80, which acts as the Proton donor. Substrate-binding positions include 81-82 (GN), Asn166, Asn200, and 218-219 (ER). The Proton acceptor role is filled by Cys227. Residue 228-229 (GT) participates in substrate binding.

Belongs to the diaminopimelate epimerase family. In terms of assembly, homodimer.

It localises to the cytoplasm. The catalysed reaction is (2S,6S)-2,6-diaminopimelate = meso-2,6-diaminopimelate. The protein operates within amino-acid biosynthesis; L-lysine biosynthesis via DAP pathway; DL-2,6-diaminopimelate from LL-2,6-diaminopimelate: step 1/1. Its function is as follows. Catalyzes the stereoinversion of LL-2,6-diaminopimelate (L,L-DAP) to meso-diaminopimelate (meso-DAP), a precursor of L-lysine and an essential component of the bacterial peptidoglycan. This Caulobacter vibrioides (strain ATCC 19089 / CIP 103742 / CB 15) (Caulobacter crescentus) protein is Diaminopimelate epimerase.